The primary structure comprises 42 residues: Histone H1B (42 aa).

Positions 1–42 (TYYELIKAAILALKERNGSSAQAIKKYILENNKIEFQQTFLR) constitute an H15 domain.

This sequence belongs to the histone H1/H5 family.

It is found in the nucleus. Its subcellular location is the chromosome. Functionally, histones H1 are necessary for the condensation of nucleosome chains into higher-order structures. This is Histone H1B from Olisthodiscus luteus (Marine phytoflagellate).